Reading from the N-terminus, the 953-residue chain is UPF0746 protein DDB_G0281301 (953 aa).

Residues Met1–Glu10 show a composition bias toward basic and acidic residues. The segment at Met1 to Leu23 is disordered. Acidic residues predominate over residues Asn11 to Asp21. The region spanning Tyr35–Phe69 is the SAP domain.

The protein belongs to the UPF0746 family.

The polypeptide is UPF0746 protein DDB_G0281301 (Dictyostelium discoideum (Social amoeba)).